Consider the following 101-residue polypeptide: uncharacterized protein (101 aa).

It localises to the mitochondrion. This is an uncharacterized protein from Arabidopsis thaliana (Mouse-ear cress).